A 420-amino-acid chain; its full sequence is Tryptophan synthase beta chain (420 aa).

Lys100 is subject to N6-(pyridoxal phosphate)lysine.

It belongs to the TrpB family. As to quaternary structure, tetramer of two alpha and two beta chains. It depends on pyridoxal 5'-phosphate as a cofactor.

It catalyses the reaction (1S,2R)-1-C-(indol-3-yl)glycerol 3-phosphate + L-serine = D-glyceraldehyde 3-phosphate + L-tryptophan + H2O. The protein operates within amino-acid biosynthesis; L-tryptophan biosynthesis; L-tryptophan from chorismate: step 5/5. The beta subunit is responsible for the synthesis of L-tryptophan from indole and L-serine. The sequence is that of Tryptophan synthase beta chain from Pyrobaculum islandicum (strain DSM 4184 / JCM 9189 / GEO3).